Reading from the N-terminus, the 204-residue chain is Glycerol-3-phosphate acyltransferase (204 aa).

5 helical membrane passes run 8 to 28 (ILIF…CYIF), 53 to 73 (VPAA…VVIA), 81 to 101 (FITA…IFFG), 116 to 136 (FGFS…VAII), and 155 to 175 (VIFT…IIIL).

It belongs to the PlsY family. Probably interacts with PlsX.

It is found in the cell inner membrane. The enzyme catalyses an acyl phosphate + sn-glycerol 3-phosphate = a 1-acyl-sn-glycero-3-phosphate + phosphate. It participates in lipid metabolism; phospholipid metabolism. Catalyzes the transfer of an acyl group from acyl-phosphate (acyl-PO(4)) to glycerol-3-phosphate (G3P) to form lysophosphatidic acid (LPA). This enzyme utilizes acyl-phosphate as fatty acyl donor, but not acyl-CoA or acyl-ACP. The chain is Glycerol-3-phosphate acyltransferase from Francisella tularensis subsp. tularensis (strain FSC 198).